The primary structure comprises 170 residues: uncharacterized protein (170 aa).

The next 3 membrane-spanning stretches (helical) occupy residues 31 to 51 (ILAVVNGSITIILSIIVFYIF), 58 to 78 (LFLITAGILTVFVFLYGLLLF), and 133 to 153 (IDFIVMIGMITISVIVVMLLF).

The protein to M.jannaschii MJ0554 and MJ0587.

Its subcellular location is the cell membrane. This is an uncharacterized protein from Methanocaldococcus jannaschii (strain ATCC 43067 / DSM 2661 / JAL-1 / JCM 10045 / NBRC 100440) (Methanococcus jannaschii).